A 750-amino-acid chain; its full sequence is NAD(P)H-quinone oxidoreductase subunit 5, chloroplastic (750 aa).

16 helical membrane-spanning segments follow: residues Trp-9–Phe-29, Trp-40–Ile-60, Ile-89–Ile-109, Phe-125–Ile-145, Ile-147–Thr-167, Gly-185–Phe-205, Ala-230–Leu-250, Thr-258–Ala-278, Leu-283–Leu-303, Leu-327–Ile-347, Ala-354–Ser-374, Thr-396–Ser-416, Trp-425–Tyr-445, Leu-548–Phe-568, Ile-607–Ile-627, and Leu-724–Phe-744.

The protein belongs to the complex I subunit 5 family. In terms of assembly, NDH is composed of at least 16 different subunits, 5 of which are encoded in the nucleus.

It localises to the plastid. The protein localises to the chloroplast thylakoid membrane. The catalysed reaction is a plastoquinone + NADH + (n+1) H(+)(in) = a plastoquinol + NAD(+) + n H(+)(out). It carries out the reaction a plastoquinone + NADPH + (n+1) H(+)(in) = a plastoquinol + NADP(+) + n H(+)(out). NDH shuttles electrons from NAD(P)H:plastoquinone, via FMN and iron-sulfur (Fe-S) centers, to quinones in the photosynthetic chain and possibly in a chloroplast respiratory chain. The immediate electron acceptor for the enzyme in this species is believed to be plastoquinone. Couples the redox reaction to proton translocation, and thus conserves the redox energy in a proton gradient. In Tecoma stans (Yellow bells), this protein is NAD(P)H-quinone oxidoreductase subunit 5, chloroplastic (ndhF).